The following is a 169-amino-acid chain: Myosin regulatory light chain 11 (169 aa).

A2 is subject to N,N,N-trimethylalanine. 2 positions are modified to phosphoserine: S15 and S16. Phosphothreonine is present on residues T25 and T35. Positions 25–60 constitute an EF-hand 1 domain; it reads TQIQEFKEAFTVIDQNRDGIIDKEDLRDTFAAMGRL. The Ca(2+) site is built by D38, N40, D42, and D49. S75 carries the post-translational modification Phosphoserine. EF-hand domains are found at residues 95 to 130 and 131 to 166; these read DPED…QCDR and FSQE…GDAK. T101 bears the Phosphothreonine mark.

Myosin is a hexamer of 2 heavy chains and 4 light chains. Expressed in fetal and adult skeletal muscle.

Functionally, myosin regulatory subunit that plays an essential role to maintain muscle integrity during early development. Plays a role in muscle contraction. The sequence is that of Myosin regulatory light chain 11 from Homo sapiens (Human).